The following is a 374-amino-acid chain: Succinyl-diaminopimelate desuccinylase (374 aa).

Zn(2+) is bound at residue His66. Asp68 is an active-site residue. A Zn(2+)-binding site is contributed by Asp99. Catalysis depends on Glu133, which acts as the Proton acceptor. Zn(2+) is bound by residues Glu134, Glu162, and His348.

It belongs to the peptidase M20A family. DapE subfamily. As to quaternary structure, homodimer. Requires Zn(2+) as cofactor. Co(2+) serves as cofactor.

The catalysed reaction is N-succinyl-(2S,6S)-2,6-diaminopimelate + H2O = (2S,6S)-2,6-diaminopimelate + succinate. It participates in amino-acid biosynthesis; L-lysine biosynthesis via DAP pathway; LL-2,6-diaminopimelate from (S)-tetrahydrodipicolinate (succinylase route): step 3/3. In terms of biological role, catalyzes the hydrolysis of N-succinyl-L,L-diaminopimelic acid (SDAP), forming succinate and LL-2,6-diaminopimelate (DAP), an intermediate involved in the bacterial biosynthesis of lysine and meso-diaminopimelic acid, an essential component of bacterial cell walls. This chain is Succinyl-diaminopimelate desuccinylase, found in Coxiella burnetii (strain RSA 331 / Henzerling II).